A 136-amino-acid chain; its full sequence is Protein NrdI (136 aa).

This sequence belongs to the NrdI family.

Functionally, probably involved in ribonucleotide reductase function. The polypeptide is Protein NrdI (Escherichia coli O1:K1 / APEC).